Consider the following 235-residue polypeptide: Leucyl/phenylalanyl-tRNA--protein transferase (235 aa).

It belongs to the L/F-transferase family.

Its subcellular location is the cytoplasm. The enzyme catalyses N-terminal L-lysyl-[protein] + L-leucyl-tRNA(Leu) = N-terminal L-leucyl-L-lysyl-[protein] + tRNA(Leu) + H(+). It carries out the reaction N-terminal L-arginyl-[protein] + L-leucyl-tRNA(Leu) = N-terminal L-leucyl-L-arginyl-[protein] + tRNA(Leu) + H(+). It catalyses the reaction L-phenylalanyl-tRNA(Phe) + an N-terminal L-alpha-aminoacyl-[protein] = an N-terminal L-phenylalanyl-L-alpha-aminoacyl-[protein] + tRNA(Phe). Its function is as follows. Functions in the N-end rule pathway of protein degradation where it conjugates Leu, Phe and, less efficiently, Met from aminoacyl-tRNAs to the N-termini of proteins containing an N-terminal arginine or lysine. The protein is Leucyl/phenylalanyl-tRNA--protein transferase of Anaeromyxobacter sp. (strain Fw109-5).